Here is a 360-residue protein sequence, read N- to C-terminus: Magnesium transporter NIPA2 (360 aa).

Residues 1–9 are Extracellular-facing; the sequence is MSQGRGKYD. A helical transmembrane segment spans residues 10-30; sequence FYIGLGLAMSSSIFIGGSFIL. Residues 31-56 lie on the Cytoplasmic side of the membrane; sequence KKKGLLRLARKGSMRAGQGGHAYLKE. Residues 57–77 traverse the membrane as a helical segment; sequence WLWWAGLLSMGAGEVANFAAY. Position 78 (A78) is a topological domain, extracellular. A helical transmembrane segment spans residues 79–99; it reads FAPATLVTPLGALSVLVSAIL. The Cytoplasmic segment spans residues 100–107; that stretch reads SSYFLNER. Residues 108 to 128 form a helical membrane-spanning segment; the sequence is LNLHGKIGCLLSILGSTVMVI. Residues 129 to 149 lie on the Extracellular side of the membrane; it reads HAPKEEEIETLNEMSHKLGDP. A helical transmembrane segment spans residues 150-170; the sequence is GFVVFATLVVIVALILIFVVG. Residues 171-175 are Cytoplasmic-facing; that stretch reads PRHGQ. The helical transmembrane segment at 176 to 196 threads the bilayer; it reads TNILVYITICSVIGAFSVSCV. Topologically, residues 197-215 are extracellular; the sequence is KGLGIAIKELFAGKPVLRH. A helical membrane pass occupies residues 216 to 236; sequence PLAWILLLSLIVCVSTQINYL. The Cytoplasmic segment spans residues 237–246; sequence NRALDIFNTS. Residues 247–267 traverse the membrane as a helical segment; it reads IVTPIYYVFFTTSVLTCSAIL. Residues 268–278 lie on the Extracellular side of the membrane; the sequence is FKEWQDMPVDD. A helical membrane pass occupies residues 279 to 299; that stretch reads VIGTLSGFFTIIVGIFLLHAF. The Cytoplasmic segment spans residues 300–360; that stretch reads KDVSFSLASL…SRRNGNLTAF (61 aa).

This sequence belongs to the NIPA family. Widely expressed.

Its subcellular location is the cell membrane. It localises to the early endosome. It carries out the reaction Mg(2+)(in) = Mg(2+)(out). Acts as a selective Mg(2+) transporter. This chain is Magnesium transporter NIPA2 (NIPA2), found in Homo sapiens (Human).